Consider the following 608-residue polypeptide: Glutamyl-tRNA(Gln) amidotransferase subunit E (608 aa).

Positions 401–428 are disordered; it reads PEETRAANPDGTTRFLRPRPGAARMYPE.

It belongs to the GatB/GatE family. GatE subfamily. Heterodimer of GatD and GatE.

It catalyses the reaction L-glutamyl-tRNA(Gln) + L-glutamine + ATP + H2O = L-glutaminyl-tRNA(Gln) + L-glutamate + ADP + phosphate + H(+). Its function is as follows. Allows the formation of correctly charged Gln-tRNA(Gln) through the transamidation of misacylated Glu-tRNA(Gln) in organisms which lack glutaminyl-tRNA synthetase. The reaction takes place in the presence of glutamine and ATP through an activated gamma-phospho-Glu-tRNA(Gln). The GatDE system is specific for glutamate and does not act on aspartate. The chain is Glutamyl-tRNA(Gln) amidotransferase subunit E from Pyrobaculum arsenaticum (strain DSM 13514 / JCM 11321 / PZ6).